Consider the following 344-residue polypeptide: Heat-inducible transcription repressor HrcA (344 aa).

Belongs to the HrcA family.

Negative regulator of class I heat shock genes (grpE-dnaK-dnaJ and groELS operons). Prevents heat-shock induction of these operons. This chain is Heat-inducible transcription repressor HrcA, found in Streptococcus pneumoniae (strain 70585).